A 470-amino-acid chain; its full sequence is Cysteine--tRNA ligase (470 aa).

Cys27 is a Zn(2+) binding site. The 'HIGH' region signature appears at 29–39 (PTVYNFFHIGN). 3 residues coordinate Zn(2+): Cys211, His236, and Glu240. A 'KMSKS' region motif is present at residues 268 to 272 (KMSKS). Lys271 contacts ATP.

Belongs to the class-I aminoacyl-tRNA synthetase family. In terms of assembly, monomer. Requires Zn(2+) as cofactor.

The protein resides in the cytoplasm. The enzyme catalyses tRNA(Cys) + L-cysteine + ATP = L-cysteinyl-tRNA(Cys) + AMP + diphosphate. The sequence is that of Cysteine--tRNA ligase from Clostridium botulinum (strain Eklund 17B / Type B).